The primary structure comprises 507 residues: Probable Xaa-Pro aminopeptidase HCBG_01484 (507 aa).

Mn(2+)-binding residues include aspartate 283, aspartate 294, glutamate 431, and glutamate 469.

It belongs to the peptidase M24B family. Mn(2+) is required as a cofactor.

It catalyses the reaction Release of any N-terminal amino acid, including proline, that is linked to proline, even from a dipeptide or tripeptide.. In terms of biological role, catalyzes the removal of a penultimate prolyl residue from the N-termini of peptides. This Ajellomyces capsulatus (strain G186AR / H82 / ATCC MYA-2454 / RMSCC 2432) (Darling's disease fungus) protein is Probable Xaa-Pro aminopeptidase HCBG_01484.